The following is a 62-amino-acid chain: Mastoparan-AF (62 aa).

The first 25 residues, 1-25 (MKNTILILFTAFIALLGFFGMSAEA), serve as a signal peptide directing secretion. AXPX repeat units follow at residues 25-28 (ADPI), 29-32 (ADPI), 33-36 (ADPI), and 43-46 (ADPE). The propeptide occupies 26 to 47 (DPIADPIADPISGPNAEADPEA). Phe-61 is modified (phenylalanine amide).

It belongs to the MCD family. Mastoparan subfamily. As to expression, expressed by the venom gland.

The protein resides in the secreted. The protein localises to the target cell membrane. Functionally, antimicrobial and mast cell degranulating peptide. Has broad spectrum antibacterial activity against both Gram-positive and Gram-negative bacteria (S.aureus MIC=16-32 ug/ml, S.xylosus MIC=1.5 ug/ml, S.alactolyticus MIC=8 ug/ml, C.koseri MIC=4 ug/ml, E.coli MIC=4-32 ug/ml, K.pneumoniae MIC=32 ug/ml, P.aerugiosa MIC=96 ug/ml, S.choleraesuis MIC=16 ug/ml, S.typhimurium MIC=32 ug/ml, V.parahamelytics MIC=16 ug/ml). Is also active on multi-antibiotic resistant hemolytic E.coli O157:H7. Acts by affecting membrane permeability. On E.coli O157:H7, acts through multiple membrane disruption patterns, including large perforations (full opening) at apical ends (hollow tubes), vesicle budding, forming dents, and membrane corrugation and invagination leading to irregular pits or pores. Exerts 40% lower membrane permeabilization activities on E.coli O157:H7 than on the non-pathogen E.coli BL21. Shows little hemolytic activities on sheep, chicken and human erythrocytes, but with a higher activity on chicken erythrocytes. Its mast cell degranulation activity may be related to the activation of G-protein coupled receptors in mast cells as well as interaction with other proteins located in cell endosomal membranes in the mast cells. In Vespa affinis (Lesser banded hornet), this protein is Mastoparan-AF.